The following is a 290-amino-acid chain: Small ribosomal subunit protein uS11 (290 aa).

The tract at residues 243–271 is disordered; that stretch reads DWEAAPAGFPATGEWSDAAPGAAAPNWDA. Residues 257–271 show a composition bias toward low complexity; that stretch reads WSDAAPGAAAPNWDA.

Belongs to the universal ribosomal protein uS2 family. As to quaternary structure, component of the small ribosomal subunit (SSU). Mature N.crassa ribosomes consist of a small (40S) and a large (60S) subunit. The 40S small subunit contains 1 molecule of ribosomal RNA (18S rRNA) and at least 32 different proteins. The large 60S subunit contains 3 rRNA molecules (26S, 5.8S and 5S rRNA) and at least 42 different proteins. Interacts with rps21.

The protein localises to the cytoplasm. Functionally, component of the ribosome, a large ribonucleoprotein complex responsible for the synthesis of proteins in the cell. The small ribosomal subunit (SSU) binds messenger RNAs (mRNAs) and translates the encoded message by selecting cognate aminoacyl-transfer RNA (tRNA) molecules. The large subunit (LSU) contains the ribosomal catalytic site termed the peptidyl transferase center (PTC), which catalyzes the formation of peptide bonds, thereby polymerizing the amino acids delivered by tRNAs into a polypeptide chain. The nascent polypeptides leave the ribosome through a tunnel in the LSU and interact with protein factors that function in enzymatic processing, targeting, and the membrane insertion of nascent chains at the exit of the ribosomal tunnel. uS2 is required for the assembly and/or stability of the 40S ribosomal subunit. Required for the processing of the 20S rRNA-precursor to mature 18S rRNA in a late step of the maturation of 40S ribosomal subunits. This Neurospora crassa (strain ATCC 24698 / 74-OR23-1A / CBS 708.71 / DSM 1257 / FGSC 987) protein is Small ribosomal subunit protein uS11.